The primary structure comprises 406 residues: MKNEVKKVVLAYSGGLDTSIILKWLQDEYNCEVVTFTADIGQGEELEPARKKALSLGIKEENIFIKDLRDEFVKDYVFPMFRANAIYEGEYLLGTSIARPLIAKTQAQIALQTGADAVSHGATGKGNDQVRFELGYLAFNPDLKIIAPWREWDLNSREKLLAYAQKHGIDISKKKGKSPYSMDANLLHISYEGLVLEDPAHAPEEDMWRWSKSPKDAPNESEIIELDFQKGDLVAINGEKLSPAGLLTKLNELGCKHGIGRLDIVENRYVGMKSRGCYETPGGTILLKAHRALESITLDREAAHLKDELMPKYASLIYNGYWFSPERMMLQALIDESQIHANGRVKLELYKGNVMIIGRESANDSLFNAAYCTFEEDEVYNQKDAAGFIKLNALRFIIAGKNGRKF.

ATP-binding positions include 11 to 19 and Ala-38; that span reads AYSGGLDTS. L-citrulline is bound by residues Tyr-91 and Ser-96. ATP is bound at residue Gly-121. Residues Thr-123, Asn-127, and Asp-128 each coordinate L-aspartate. Asn-127 serves as a coordination point for L-citrulline. Residues Arg-131, Ser-181, Ser-190, Glu-266, and Tyr-278 each contribute to the L-citrulline site.

It belongs to the argininosuccinate synthase family. Type 1 subfamily. In terms of assembly, homotetramer.

The protein resides in the cytoplasm. The enzyme catalyses L-citrulline + L-aspartate + ATP = 2-(N(omega)-L-arginino)succinate + AMP + diphosphate + H(+). It participates in amino-acid biosynthesis; L-arginine biosynthesis; L-arginine from L-ornithine and carbamoyl phosphate: step 2/3. The protein is Argininosuccinate synthase of Campylobacter jejuni subsp. jejuni serotype O:6 (strain 81116 / NCTC 11828).